The following is a 236-amino-acid chain: MAEAVESPGDPGTTTPRPLFAGLSDISISQDIPVEGEITIPVRSRVREFDSSTLNESVQNTIMRDLKAVGKKFMHVLYPRKSNTLLRDWDLWGPLILCVTLALMLQRGSVDSEKDGGPQFAEVFVIVWFGAVTITLNSKLLGGNISFFQSLCVLGYCILPLTMAMLVCRLVLLAEPGPVNFMVRLFVVIIMFAWSIVASTAFLADSQPPNRKALAVYPVFLFYFVISWMILTFTPQ.

A2 is modified (N-acetylalanine). The Cytoplasmic segment spans residues 2–84; that stretch reads AEAVESPGDP…HVLYPRKSNT (83 aa). S7 is modified (phosphoserine). The chain crosses the membrane as a helical span at residues 85 to 105; sequence LLRDWDLWGPLILCVTLALML. The Lumenal segment spans residues 106-115; the sequence is QRGSVDSEKD. The helical transmembrane segment at 116–136 threads the bilayer; the sequence is GGPQFAEVFVIVWFGAVTITL. The Cytoplasmic segment spans residues 137–146; that stretch reads NSKLLGGNIS. A helical transmembrane segment spans residues 147-167; sequence FFQSLCVLGYCILPLTMAMLV. The Lumenal portion of the chain corresponds to 168–184; sequence CRLVLLAEPGPVNFMVR. A helical membrane pass occupies residues 185–205; that stretch reads LFVVIIMFAWSIVASTAFLAD. Residues 206–212 are Cytoplasmic-facing; that stretch reads SQPPNRK. Residues 213-233 form a helical membrane-spanning segment; sequence ALAVYPVFLFYFVISWMILTF. Residues 234 to 236 lie on the Lumenal side of the membrane; sequence TPQ.

This sequence belongs to the YIP1 family. Predominantly interacts with YIPF1 or YIPF2, but may also form a ternary complex with YIPF1 and YIPF2. This interaction may stabilize YIPF1 and YIPF2.

It is found in the golgi apparatus membrane. In terms of biological role, may be required for stable YIPF1 and YIPF2 protein expression. The protein is Protein YIPF6 (YIPF6) of Bos taurus (Bovine).